The primary structure comprises 104 residues: UPF0213 protein in VLF1-GP41 intergenic region (104 aa).

The region spanning 9–89 (KVWCVYILRQ…SKYFKLRLIK (81 aa)) is the GIY-YIG domain.

This sequence belongs to the UPF0213 family.

This chain is UPF0213 protein in VLF1-GP41 intergenic region, found in Autographa californica nuclear polyhedrosis virus (AcMNPV).